The chain runs to 520 residues: GMP synthase [glutamine-hydrolyzing] (520 aa).

One can recognise a Glutamine amidotransferase type-1 domain in the interval 9–202 (TVLIVDFGSQ…VHKIAGIKGD (194 aa)). The Nucleophile role is filled by Cys-86. Residues His-176 and Glu-178 contribute to the active site. In terms of domain architecture, GMPS ATP-PPase spans 203-395 (WTMSAYRAKA…LGLPESFIGR (193 aa)). An ATP-binding site is contributed by 230 to 236 (SGGVDSS).

As to quaternary structure, homodimer.

The catalysed reaction is XMP + L-glutamine + ATP + H2O = GMP + L-glutamate + AMP + diphosphate + 2 H(+). The protein operates within purine metabolism; GMP biosynthesis; GMP from XMP (L-Gln route): step 1/1. Its function is as follows. Catalyzes the synthesis of GMP from XMP. The chain is GMP synthase [glutamine-hydrolyzing] from Sinorhizobium fredii (strain NBRC 101917 / NGR234).